A 149-amino-acid polypeptide reads, in one-letter code: D-aminoacyl-tRNA deacylase (149 aa).

Positions 137–138 match the Gly-cisPro motif, important for rejection of L-amino acids motif; sequence GP.

Belongs to the DTD family. Homodimer.

The protein resides in the cytoplasm. It catalyses the reaction glycyl-tRNA(Ala) + H2O = tRNA(Ala) + glycine + H(+). The enzyme catalyses a D-aminoacyl-tRNA + H2O = a tRNA + a D-alpha-amino acid + H(+). Functionally, an aminoacyl-tRNA editing enzyme that deacylates mischarged D-aminoacyl-tRNAs. Also deacylates mischarged glycyl-tRNA(Ala), protecting cells against glycine mischarging by AlaRS. Acts via tRNA-based rather than protein-based catalysis; rejects L-amino acids rather than detecting D-amino acids in the active site. By recycling D-aminoacyl-tRNA to D-amino acids and free tRNA molecules, this enzyme counteracts the toxicity associated with the formation of D-aminoacyl-tRNA entities in vivo and helps enforce protein L-homochirality. The protein is D-aminoacyl-tRNA deacylase of Desulfotalea psychrophila (strain LSv54 / DSM 12343).